The sequence spans 750 residues: (13E)-labda-7,13-dien-15-ol synthase (750 aa).

Aspartate 284, aspartate 286, aspartate 501, aspartate 505, asparagine 647, threonine 651, and glutamate 655 together coordinate Mg(2+). The short motif at 284–287 is the DXDD motif element; the sequence is DIDD. The short motif at 501 to 505 is the DDXXD motif element; it reads DDLAD.

This sequence belongs to the terpene synthase family. Mg(2+) serves as cofactor.

It catalyses the reaction geranylgeranyl diphosphate + H2O = (13E)-labda-7,13-dien-15-ol + diphosphate. The protein operates within secondary metabolite biosynthesis; terpenoid biosynthesis. Functionally, bifunctional diterpene synthase that directly generates the endocyclic double bond, as well as the hydroxyl group: produces an endocyclic double bond isomer of copalyl diphosphate (CPP), and carries out subsequent replacement of the diphosphate by a hydroxyl group to form (13E)-labda-7,13-dien-15-ol. The protein is (13E)-labda-7,13-dien-15-ol synthase of Selaginella moellendorffii (Spikemoss).